A 926-amino-acid polypeptide reads, in one-letter code: Nitrate reductase [NADH] (926 aa).

Positions 1-85 are disordered; the sequence is MAASVDRQYH…SDSEEDDDEN (85 aa). A compositionally biased stretch (polar residues) spans 36–46; sequence YTFSNPPSSNG. Low complexity predominate over residues 58–73; the sequence is DNNSNSNNGSNNNNNR. Cys204 provides a ligand contact to Mo-molybdopterin. A Cytochrome b5 heme-binding domain is found at 551-626; that stretch reads SKMYSMSEVK…LEDFRIGELI (76 aa). His586 and His609 together coordinate heme. The FAD-binding FR-type domain maps to 670–782; the sequence is RVKIPCKLIE…KGPLGHIEYL (113 aa). FAD-binding positions include 722 to 725, 739 to 743, Phe744, Phe751, 756 to 758, and Thr809; these read RAYT, VVKVY, and VMS.

It belongs to the nitrate reductase family. Homodimer. FAD is required as a cofactor. The cofactor is heme. It depends on Mo-molybdopterin as a cofactor.

The enzyme catalyses nitrite + NAD(+) + H2O = nitrate + NADH + H(+). Nitrate reductase is a key enzyme involved in the first step of nitrate assimilation in plants, fungi and bacteria. This is Nitrate reductase [NADH] (NIA) from Spinacia oleracea (Spinach).